The primary structure comprises 532 residues: Optineurin (532 aa).

Coiled-coil stretches lie at residues 27-143 and 195-466; these read SMKN…LKLG and EEVA…EEMM. Residues 502 to 532 form a CCHC NOA-type zinc finger; the sequence is QPSITVYTCPKCNLTVPDMDTLQIHVMDCIT. Zn(2+) contacts are provided by Cys-510, Cys-513, His-526, and Cys-530.

The protein localises to the cytoplasm. The protein resides in the perinuclear region. Its subcellular location is the golgi apparatus. It localises to the trans-Golgi network. It is found in the cytoplasmic vesicle. The protein localises to the recycling endosome. The protein resides in the autophagosome. Probably part of the TNF-alpha signaling pathway that can shift the equilibrium toward induction of cell death. May act by regulating membrane trafficking and cellular morphogenesis. The protein is Optineurin (optn) of Xenopus laevis (African clawed frog).